Here is a 264-residue protein sequence, read N- to C-terminus: PDZ domain-containing protein 9 (264 aa).

One can recognise a PDZ domain in the interval 30–109 (QTKLTVGSLG…GTVLQIKVYR (80 aa)).

This Homo sapiens (Human) protein is PDZ domain-containing protein 9 (PDZD9).